The chain runs to 470 residues: ATP synthase subunit beta (470 aa).

Position 157-164 (157-164 (GGAGVGKT)) interacts with ATP.

It belongs to the ATPase alpha/beta chains family. In terms of assembly, F-type ATPases have 2 components, CF(1) - the catalytic core - and CF(0) - the membrane proton channel. CF(1) has five subunits: alpha(3), beta(3), gamma(1), delta(1), epsilon(1). CF(0) has three main subunits: a(1), b(2) and c(9-12). The alpha and beta chains form an alternating ring which encloses part of the gamma chain. CF(1) is attached to CF(0) by a central stalk formed by the gamma and epsilon chains, while a peripheral stalk is formed by the delta and b chains.

It is found in the cell inner membrane. The enzyme catalyses ATP + H2O + 4 H(+)(in) = ADP + phosphate + 5 H(+)(out). Its function is as follows. Produces ATP from ADP in the presence of a proton gradient across the membrane. The catalytic sites are hosted primarily by the beta subunits. The sequence is that of ATP synthase subunit beta from Geobacter sp. (strain M21).